Reading from the N-terminus, the 213-residue chain is MGVEVCVKAAVGHPDTLGDCPFSQRVLLTLEEKKVPYEMKLIDVQNKPDWFLKISPEGKVPVFNGGDGKWIPDSDVITQVIEEKYPTPSLVTPPEYASVGSKIFSCFTTFLKSKDPNDGSEKALLTELQALEEHLKAHGPFINGQNISAADLSLAPKLYHLQVALEHFKGWKIPEDLTNVHAYTEALFSRESFIKTKAAKEHLIAGWAPKVNA.

2 residues coordinate glutathione: K8 and D19. Positions 8 and 19 each coordinate L-ascorbate. The GST N-terminal domain occupies 10-89 (AVGHPDTLGD…VIEEKYPTPS (80 aa)). Residue C20 is the Nucleophile of the active site. 5 residues coordinate glutathione: K47, V60, S74, H160, and W207. The GST C-terminal domain maps to 73 to 213 (DSDVITQVIE…IAGWAPKVNA (141 aa)). K210 provides a ligand contact to L-ascorbate.

It belongs to the GST superfamily. DHAR family. In terms of assembly, monomer.

It is found in the cytoplasm. Its subcellular location is the cytosol. The catalysed reaction is RX + glutathione = an S-substituted glutathione + a halide anion + H(+). It catalyses the reaction L-dehydroascorbate + 2 glutathione = glutathione disulfide + L-ascorbate. Functionally, involved in ascorbate homeostasis. Maintains redox pools of ascorbate by recycling dihydroascorbate (DHA) to ascorbate. Involved in scavenging reactive oxygen species (ROS) under oxidative stresses. Possesses dehydroascorbate reductase (DHAR) activity in vitro. May function via a ping-pong reaction mechanism with an electron transfer at the active site. Possesses chaperone-like activity in vitro. The polypeptide is Probable glutathione S-transferase DHAR1, cytosolic (Oryza sativa subsp. japonica (Rice)).